The following is a 353-amino-acid chain: Stomatin-like protein 2, mitochondrial (353 aa).

Residues 1–28 constitute a mitochondrion transit peptide; that stretch reads MLARAARGTGALLLRGSVQASGRVPRRA. Position 17 is a phosphoserine; by PKC/PRKCZ (Ser17). Position 124 is a phosphotyrosine (Tyr124). Lys145 bears the N6-acetyllysine; alternate mark. Position 145 is an N6-succinyllysine; alternate (Lys145). Residues 215–252 are a coiled coil; the sequence is INVAEGKKQAQILASEAEKAEQINQAAGEASAVLAKAK. Lys233 bears the N6-acetyllysine mark. Residues 324-353 form a disordered region; that stretch reads VPGAQNSSQSRRDVQATDTSIEELGRVKLS. Ser330 bears the Phosphoserine mark.

This sequence belongs to the band 7/mec-2 family. In terms of assembly, forms homooligomers. Interacts with MFN2; may form heterooligomers. Interacts with PHB1 and PHB2; recruits them to cardiolipin-enriched mitochondrial membranes and stabilizes them. Interacts with CACNA2D2.

The protein localises to the cell membrane. It localises to the mitochondrion. The protein resides in the mitochondrion inner membrane. Its subcellular location is the mitochondrion intermembrane space. It is found in the membrane raft. The protein localises to the cytoplasm. It localises to the cytoskeleton. In terms of biological role, mitochondrial protein that probably regulates the biogenesis and the activity of mitochondria. Stimulates cardiolipin biosynthesis, binds cardiolipin-enriched membranes where it recruits and stabilizes some proteins including prohibitin and may therefore act in the organization of functional microdomains in mitochondrial membranes. Through regulation of the mitochondrial function may play a role into several biological processes including cell migration, cell proliferation, T-cell activation, calcium homeostasis and cellular response to stress. May play a role in calcium homeostasis through negative regulation of calcium efflux from mitochondria. Required for mitochondrial hyperfusion a pro-survival cellular response to stress which results in increased ATP production by mitochondria. May also regulate the organization of functional domains at the plasma membrane and play a role in T-cell activation through association with the T-cell receptor signaling complex and its regulation. The sequence is that of Stomatin-like protein 2, mitochondrial (Stoml2) from Mus musculus (Mouse).